A 300-amino-acid chain; its full sequence is 33 kDa chaperonin (300 aa).

Intrachain disulfides connect Cys-247–Cys-249 and Cys-280–Cys-283.

This sequence belongs to the HSP33 family. In terms of processing, under oxidizing conditions two disulfide bonds are formed involving the reactive cysteines. Under reducing conditions zinc is bound to the reactive cysteines and the protein is inactive.

The protein localises to the cytoplasm. Redox regulated molecular chaperone. Protects both thermally unfolding and oxidatively damaged proteins from irreversible aggregation. Plays an important role in the bacterial defense system toward oxidative stress. This chain is 33 kDa chaperonin, found in Prochlorococcus marinus subsp. pastoris (strain CCMP1986 / NIES-2087 / MED4).